The sequence spans 1019 residues: Probable LRR receptor-like serine/threonine-protein kinase At1g29720 (1019 aa).

Residues 1–19 (MSIILWSFFLFFTIILSSL) form the signal peptide. The Extracellular segment spans residues 20–615 (TNITTLASFS…EKTKHHIKYP (596 aa)). Residues Asn-21, Asn-79, and Asn-90 are each glycosylated (N-linked (GlcNAc...) asparagine). LRR repeat units lie at residues 93–117 (ICRI…LTKL), 118–141 (PYLK…WAKM), 143–165 (YLTS…LQNF), 166–189 (KNLT…LGNL), 190–212 (TSLT…TLAR), 214–236 (VNLE…YIGN), 237–261 (WTRL…VVRL), 263–283 (NLLE…NLSS), 284–307 (KGLK…IWNL), 308–330 (TDLK…VQNP), 332–351 (KNIY…GGLL), 352–374 (NSQS…QKGS), and 375–398 (TINT…AVPA). Residues Asn-153, Asn-167, and Asn-188 are each glycosylated (N-linked (GlcNAc...) asparagine). N-linked (GlcNAc...) asparagine glycans are attached at residues Asn-225 and Asn-236. 2 N-linked (GlcNAc...) asparagine glycosylation sites follow: Asn-280 and Asn-306. N-linked (GlcNAc...) asparagine glycosylation is found at Asn-363, Asn-387, Asn-469, and Asn-558. Residues 616–636 (LILGASGALVTIVLLAVGIYA) traverse the membrane as a helical segment. Topologically, residues 637–1019 (RGIYRRDNNR…STVENSSSSL (383 aa)) are cytoplasmic. In terms of domain architecture, Protein kinase spans 673-946 (FDQANKLGEG…EAVKMLEGEI (274 aa)). ATP-binding positions include 679–687 (LGEGGFGSV) and Lys-701. Tyr-746 is modified (phosphotyrosine). The active-site Proton acceptor is the Asp-797. Position 830 is a phosphoserine (Ser-830). Phosphothreonine occurs at positions 831 and 836. The residue at position 844 (Tyr-844) is a Phosphotyrosine.

It belongs to the protein kinase superfamily. Ser/Thr protein kinase family.

It is found in the cell membrane. The catalysed reaction is L-seryl-[protein] + ATP = O-phospho-L-seryl-[protein] + ADP + H(+). The enzyme catalyses L-threonyl-[protein] + ATP = O-phospho-L-threonyl-[protein] + ADP + H(+). This chain is Probable LRR receptor-like serine/threonine-protein kinase At1g29720 (RFK1), found in Arabidopsis thaliana (Mouse-ear cress).